Here is a 180-residue protein sequence, read N- to C-terminus: ATP-dependent protease subunit HslV (180 aa).

Thr6 is an active-site residue. The Na(+) site is built by Ala164, Cys167, and Thr170.

This sequence belongs to the peptidase T1B family. HslV subfamily. In terms of assembly, a double ring-shaped homohexamer of HslV is capped on each side by a ring-shaped HslU homohexamer. The assembly of the HslU/HslV complex is dependent on binding of ATP.

It is found in the cytoplasm. It carries out the reaction ATP-dependent cleavage of peptide bonds with broad specificity.. Allosterically activated by HslU binding. Protease subunit of a proteasome-like degradation complex believed to be a general protein degrading machinery. This is ATP-dependent protease subunit HslV from Borrelia hermsii (strain HS1 / DAH).